Consider the following 79-residue polypeptide: Anti-insect Ac4 (79 aa).

A signal peptide spans 1-17; sequence MISLSLLLMIGVESVRD. Positions 18–77 constitute an LCN-type CS-alpha/beta domain; it reads GYIVDFKNCVYRCVPPCDGLCKKNGGKGGSCSFLIGSGLACWCNALPDNVPIKDPLHKCP. Disulfide bonds link Cys-26/Cys-76, Cys-30/Cys-48, Cys-34/Cys-58, and Cys-38/Cys-60.

This sequence belongs to the long (4 C-C) scorpion toxin superfamily. Sodium channel inhibitor family. Alpha subfamily. Expressed by the venom gland.

The protein localises to the secreted. In terms of biological role, alpha toxins bind voltage-independently at site-3 of sodium channels (Nav) and inhibit the inactivation of the activated channels, thereby blocking neuronal transmission. This protein is weakly toxic against insects (ED(50)&gt;2 ug per 100 mg of blowfly larvae), but is inactive against mammalian sodium channels (rNav1.2a, and rNav1.4). In Androctonus crassicauda (Arabian fat-tailed scorpion), this protein is Anti-insect Ac4.